A 414-amino-acid polypeptide reads, in one-letter code: Enolase (414 aa).

Gln-162 is a binding site for (2R)-2-phosphoglycerate. The Proton donor role is filled by Glu-204. Residues Asp-239, Glu-280, and Asp-307 each contribute to the Mg(2+) site. Positions 332, 361, 362, and 383 each coordinate (2R)-2-phosphoglycerate. Lys-332 acts as the Proton acceptor in catalysis.

It belongs to the enolase family. Mg(2+) serves as cofactor.

It is found in the cytoplasm. Its subcellular location is the secreted. It localises to the cell surface. It carries out the reaction (2R)-2-phosphoglycerate = phosphoenolpyruvate + H2O. The protein operates within carbohydrate degradation; glycolysis; pyruvate from D-glyceraldehyde 3-phosphate: step 4/5. Functionally, catalyzes the reversible conversion of 2-phosphoglycerate (2-PG) into phosphoenolpyruvate (PEP). It is essential for the degradation of carbohydrates via glycolysis. The sequence is that of Enolase from Campylobacter jejuni subsp. jejuni serotype O:6 (strain 81116 / NCTC 11828).